The primary structure comprises 415 residues: 8-amino-7-oxononanoate synthase (415 aa).

Arginine 21 contributes to the substrate binding site. Pyridoxal 5'-phosphate is bound at residue 117 to 118 (GY). Histidine 149 is a binding site for substrate. The pyridoxal 5'-phosphate site is built by serine 195, histidine 223, and threonine 251. At lysine 254 the chain carries N6-(pyridoxal phosphate)lysine. Threonine 374 serves as a coordination point for substrate.

The protein belongs to the class-II pyridoxal-phosphate-dependent aminotransferase family. BioF subfamily. In terms of assembly, homodimer. The cofactor is pyridoxal 5'-phosphate.

It carries out the reaction 6-carboxyhexanoyl-[ACP] + L-alanine + H(+) = (8S)-8-amino-7-oxononanoate + holo-[ACP] + CO2. Its pathway is cofactor biosynthesis; biotin biosynthesis. Its function is as follows. Catalyzes the decarboxylative condensation of pimeloyl-[acyl-carrier protein] and L-alanine to produce 8-amino-7-oxononanoate (AON), [acyl-carrier protein], and carbon dioxide. This Ralstonia pickettii (strain 12J) protein is 8-amino-7-oxononanoate synthase.